A 166-amino-acid polypeptide reads, in one-letter code: Large ribosomal subunit protein mL41 (166 aa).

The transit peptide at 1-26 (MQNCIKLVPLALKCPQRAISTSAVLD) directs the protein to the mitochondrion.

It belongs to the mitochondrion-specific ribosomal protein mL41 family. In terms of assembly, component of the mitochondrial ribosome large subunit (39S) which comprises a 16S rRNA and about 50 distinct proteins.

It is found in the mitochondrion. The chain is Large ribosomal subunit protein mL41 (mRpL41) from Drosophila pseudoobscura pseudoobscura (Fruit fly).